Here is a 215-residue protein sequence, read N- to C-terminus: Adenylate kinase (215 aa).

Position 10–15 (10–15 (GAGKGT)) interacts with ATP. Residues 30 to 59 (STGDIFRKNISENTPLGMEARSYMDKGLLV) form an NMP region. Residues threonine 31, arginine 36, 57–59 (LLV), 85–88 (GFPR), and glutamine 92 each bind AMP. The segment at 126 to 163 (GRRVCTSCGGSFHIKFNPPTIDGKCNLCGSDIVQRKDD) is LID. Arginine 127 is an ATP binding site. Residues cysteine 130 and cysteine 133 each coordinate Zn(2+). 136–137 (SF) contributes to the ATP binding site. Zn(2+) is bound by residues cysteine 150 and cysteine 153. AMP contacts are provided by arginine 160 and arginine 171. Position 199 (lysine 199) interacts with ATP.

This sequence belongs to the adenylate kinase family. As to quaternary structure, monomer.

The protein resides in the cytoplasm. It catalyses the reaction AMP + ATP = 2 ADP. Its pathway is purine metabolism; AMP biosynthesis via salvage pathway; AMP from ADP: step 1/1. In terms of biological role, catalyzes the reversible transfer of the terminal phosphate group between ATP and AMP. Plays an important role in cellular energy homeostasis and in adenine nucleotide metabolism. The protein is Adenylate kinase of Clostridium botulinum (strain Eklund 17B / Type B).